The chain runs to 732 residues: Beta-galactosidase 5 (732 aa).

The signal sequence occupies residues Met1 to Ser23. The Proton donor role is filled by Glu187. Glu256 functions as the Nucleophile in the catalytic mechanism. Asn466 carries N-linked (GlcNAc...) asparagine glycosylation.

The protein belongs to the glycosyl hydrolase 35 family. Expressed in leaves and flowers.

The protein localises to the secreted. It is found in the extracellular space. It localises to the apoplast. The enzyme catalyses Hydrolysis of terminal non-reducing beta-D-galactose residues in beta-D-galactosides.. The chain is Beta-galactosidase 5 (BGAL5) from Arabidopsis thaliana (Mouse-ear cress).